We begin with the raw amino-acid sequence, 298 residues long: Mitochondrial intermembrane space import and assembly protein 40 (298 aa).

Residues 1–33 (MYRTALRPSQSALRAIRSTTSPSALVSSGARRF) constitute a mitochondrion transit peptide. Residues 34-52 (ASTTSAPKKKSTWKGAAVR) are Mitochondrial matrix-facing. A helical; Signal-anchor for type II membrane protein membrane pass occupies residues 53–69 (WGLAVAAVYYYNTSPIF). The Mitochondrial intermembrane segment spans residues 70–298 (SDELPETAGT…TAANNNKKQQ (229 aa)). The tract at residues 101–159 (RQAAEHAAARKAAQAAAKAAATPATPSESVEEQITKAEAEAEAVPEGDSKPRSESTEGV) is disordered. The span at 110-121 (RKAAQAAAKAAA) shows a compositional bias: low complexity. Intrachain disulfides connect cysteine 191–cysteine 193, cysteine 202–cysteine 235, and cysteine 212–cysteine 225. The 45-residue stretch at 199–243 (HGPCGEEFKAAFSCFVYSTEEPKGMDCIEKFSHMQDCFRKYPEVY) folds into the CHCH domain. 2 short sequence motifs (cx9C motif) span residues 202 to 212 (CGEEFKAAFSC) and 225 to 235 (CIEKFSHMQDC). The tract at residues 248–298 (ADDEEAERASAAAPAAEGTPAKEEPVENKKEEALEPATHDATAANNNKKQQ) is disordered. Residues 256 to 266 (ASAAAPAAEGT) are compositionally biased toward low complexity. Positions 267–280 (PAKEEPVENKKEEA) are enriched in basic and acidic residues.

As to quaternary structure, monomer. It depends on Cu(2+) as a cofactor. Zn(2+) serves as cofactor.

It is found in the mitochondrion inner membrane. Functionally, required for the import and folding of small cysteine-containing proteins (small Tim) in the mitochondrial intermembrane space (IMS). Forms a redox cycle with ERV1 that involves a disulfide relay system. Precursor proteins to be imported into the IMS are translocated in their reduced form into the mitochondria. The oxidized form of MIA40 forms a transient intermolecular disulfide bridge with the reduced precursor protein, resulting in oxidation of the precursor protein that now contains an intramolecular disulfide bond and is able to undergo folding in the IMS. The sequence is that of Mitochondrial intermembrane space import and assembly protein 40 (mia-40) from Neurospora crassa (strain ATCC 24698 / 74-OR23-1A / CBS 708.71 / DSM 1257 / FGSC 987).